The primary structure comprises 201 residues: Pyridoxal 5'-phosphate synthase subunit PdxT (201 aa).

49–51 (GES) provides a ligand contact to L-glutamine. Cys-81 acts as the Nucleophile in catalysis. Residues Arg-110 and 139–140 (IR) each bind L-glutamine. Active-site charge relay system residues include His-180 and Glu-182.

This sequence belongs to the glutaminase PdxT/SNO family. In the presence of PdxS, forms a dodecamer of heterodimers. Only shows activity in the heterodimer.

It catalyses the reaction aldehydo-D-ribose 5-phosphate + D-glyceraldehyde 3-phosphate + L-glutamine = pyridoxal 5'-phosphate + L-glutamate + phosphate + 3 H2O + H(+). The enzyme catalyses L-glutamine + H2O = L-glutamate + NH4(+). It participates in cofactor biosynthesis; pyridoxal 5'-phosphate biosynthesis. Catalyzes the hydrolysis of glutamine to glutamate and ammonia as part of the biosynthesis of pyridoxal 5'-phosphate. The resulting ammonia molecule is channeled to the active site of PdxS. This is Pyridoxal 5'-phosphate synthase subunit PdxT from Salinispora arenicola (strain CNS-205).